Reading from the N-terminus, the 280-residue chain is DCN1-like protein 4 (280 aa).

A disordered region spans residues 37-71; sequence GPESHGTACCSRAMPPRKKRRPTAGDDLSAKKSRQ. The region spanning 89–275 is the DCUN1 domain; that stretch reads FSSKRCLEWF…LLDEFVEWYK (187 aa).

In terms of assembly, may interact (via the DCUN1 domain) with unneddylated cullins.

The protein resides in the nucleus. In terms of biological role, contributes to the neddylation of all cullins by transferring NEDD8 from N-terminally acetylated NEDD8-conjugating E2s enzyme to different cullin C-terminal domain-RBX complexes. This Danio rerio (Zebrafish) protein is DCN1-like protein 4.